The primary structure comprises 871 residues: DNA mismatch repair protein MutS (871 aa).

621–628 (GPNMAGKS) is a binding site for ATP.

It belongs to the DNA mismatch repair MutS family.

In terms of biological role, this protein is involved in the repair of mismatches in DNA. It is possible that it carries out the mismatch recognition step. This protein has a weak ATPase activity. The polypeptide is DNA mismatch repair protein MutS (Geobacter sulfurreducens (strain ATCC 51573 / DSM 12127 / PCA)).